The primary structure comprises 204 residues: GTP cyclohydrolase-2 (204 aa).

GTP is bound at residue 49–53 (RIHSE). 3 residues coordinate Zn(2+): Cys-54, Cys-65, and Cys-67. GTP contacts are provided by residues Gln-70, 92–94 (EGR), and Thr-114. Residue Asp-126 is the Proton acceptor of the active site. Arg-128 functions as the Nucleophile in the catalytic mechanism. Residues Thr-149 and Lys-154 each contribute to the GTP site.

The protein belongs to the GTP cyclohydrolase II family. Zn(2+) serves as cofactor.

The catalysed reaction is GTP + 4 H2O = 2,5-diamino-6-hydroxy-4-(5-phosphoribosylamino)-pyrimidine + formate + 2 phosphate + 3 H(+). It functions in the pathway cofactor biosynthesis; riboflavin biosynthesis; 5-amino-6-(D-ribitylamino)uracil from GTP: step 1/4. In terms of biological role, catalyzes the conversion of GTP to 2,5-diamino-6-ribosylamino-4(3H)-pyrimidinone 5'-phosphate (DARP), formate and pyrophosphate. The sequence is that of GTP cyclohydrolase-2 from Shewanella baltica (strain OS155 / ATCC BAA-1091).